The sequence spans 359 residues: 5-amino-6-(D-ribitylamino)uracil--L-tyrosine 4-hydroxyphenyl transferase (359 aa).

Residues 45–282 (VTYVLNANIN…VYAISRIFFK (238 aa)) form the Radical SAM core domain. Cys-59, Cys-63, and Cys-66 together coordinate [4Fe-4S] cluster.

Belongs to the radical SAM superfamily. CofH family. In terms of assembly, consists of two subunits, CofG and CofH. It depends on [4Fe-4S] cluster as a cofactor.

It carries out the reaction 5-amino-6-(D-ribitylamino)uracil + L-tyrosine + S-adenosyl-L-methionine = 5-amino-5-(4-hydroxybenzyl)-6-(D-ribitylimino)-5,6-dihydrouracil + 2-iminoacetate + 5'-deoxyadenosine + L-methionine + H(+). The protein operates within cofactor biosynthesis; coenzyme F0 biosynthesis. Its function is as follows. Catalyzes the radical-mediated synthesis of 5-amino-5-(4-hydroxybenzyl)-6-(D-ribitylimino)-5,6-dihydrouracil from 5-amino-6-(D-ribitylamino)uracil and L-tyrosine. The chain is 5-amino-6-(D-ribitylamino)uracil--L-tyrosine 4-hydroxyphenyl transferase from Methanococcus vannielii (strain ATCC 35089 / DSM 1224 / JCM 13029 / OCM 148 / SB).